The sequence spans 443 residues: Serine transporter (443 aa).

A run of 11 helical transmembrane segments spans residues 38–60, 65–87, 111–131, 150–170, 183–203, 215–235, 265–285, 319–339, 368–388, 390–410, and 422–442; these read TGWV…PVQV, LWVF…RLFI, WGIL…FVYS, GLLS…VAIS, GMVL…VGMW, GLLV…ILFI, IAFG…TLAM, VSVI…YLGF, GIMI…APVL, FTSI…AWLV, and MSLY…FLAF.

Belongs to the amino acid/polyamine transporter 2 family. SdaC/TdcC subfamily.

It localises to the cell inner membrane. Functionally, transports both D- and L-serine; allows growth of strain CFT073 cells normally unable to transport D-serine on that substrate. Transport relies on the H(+) gradient and is not competed by L-threonine. May play a role in L-cysteine detoxification. The sequence is that of Serine transporter from Escherichia coli O157:H7.